A 415-amino-acid polypeptide reads, in one-letter code: Peptide chain release factor subunit 1 (415 aa).

This sequence belongs to the eukaryotic release factor 1 family. Heterodimer of two subunits, one of which binds GTP.

The protein resides in the cytoplasm. In terms of biological role, directs the termination of nascent peptide synthesis (translation) in response to the termination codons UAA, UAG and UGA. This Methanosarcina mazei (strain ATCC BAA-159 / DSM 3647 / Goe1 / Go1 / JCM 11833 / OCM 88) (Methanosarcina frisia) protein is Peptide chain release factor subunit 1.